The following is a 158-amino-acid chain: 2-C-methyl-D-erythritol 2,4-cyclodiphosphate synthase (158 aa).

2 residues coordinate a divalent metal cation: Asp-9 and His-11. Residues 9–11 and 35–36 contribute to the 4-CDP-2-C-methyl-D-erythritol 2-phosphate site; these read DVH and HS. His-43 provides a ligand contact to a divalent metal cation. 4-CDP-2-C-methyl-D-erythritol 2-phosphate is bound by residues 57–59, 62–66, 101–107, 133–136, Phe-140, and Arg-143; these read DIG, FPDTD, AQKPKMA, and TTTE.

It belongs to the IspF family. Homotrimer. It depends on a divalent metal cation as a cofactor.

The catalysed reaction is 4-CDP-2-C-methyl-D-erythritol 2-phosphate = 2-C-methyl-D-erythritol 2,4-cyclic diphosphate + CMP. Its pathway is isoprenoid biosynthesis; isopentenyl diphosphate biosynthesis via DXP pathway; isopentenyl diphosphate from 1-deoxy-D-xylulose 5-phosphate: step 4/6. In terms of biological role, involved in the biosynthesis of isopentenyl diphosphate (IPP) and dimethylallyl diphosphate (DMAPP), two major building blocks of isoprenoid compounds. Catalyzes the conversion of 4-diphosphocytidyl-2-C-methyl-D-erythritol 2-phosphate (CDP-ME2P) to 2-C-methyl-D-erythritol 2,4-cyclodiphosphate (ME-CPP) with a corresponding release of cytidine 5-monophosphate (CMP). The chain is 2-C-methyl-D-erythritol 2,4-cyclodiphosphate synthase from Bacillus pumilus (strain SAFR-032).